The sequence spans 152 residues: Transcriptional repressor NrdR (152 aa).

Residues 3–34 (CPKCTSIEDKVIDSRISKEGSTIRRRRECLEC) fold into a zinc finger. The ATP-cone domain occupies 49-139 (IVVIKRDGRR…VYKEFRDVSE (91 aa)).

Belongs to the NrdR family. Requires Zn(2+) as cofactor.

Its function is as follows. Negatively regulates transcription of bacterial ribonucleotide reductase nrd genes and operons by binding to NrdR-boxes. The protein is Transcriptional repressor NrdR of Opitutus terrae (strain DSM 11246 / JCM 15787 / PB90-1).